Here is a 370-residue protein sequence, read N- to C-terminus: 3-dehydroquinate synthase (370 aa).

NAD(+) contacts are provided by residues 108–112 (GVVGD), 132–133 (TT), Lys145, and Lys154. The Zn(2+) site is built by Glu187, His250, and His268.

The protein belongs to the sugar phosphate cyclases superfamily. Dehydroquinate synthase family. Co(2+) is required as a cofactor. Zn(2+) serves as cofactor. It depends on NAD(+) as a cofactor.

The protein resides in the cytoplasm. It carries out the reaction 7-phospho-2-dehydro-3-deoxy-D-arabino-heptonate = 3-dehydroquinate + phosphate. Its pathway is metabolic intermediate biosynthesis; chorismate biosynthesis; chorismate from D-erythrose 4-phosphate and phosphoenolpyruvate: step 2/7. In terms of biological role, catalyzes the conversion of 3-deoxy-D-arabino-heptulosonate 7-phosphate (DAHP) to dehydroquinate (DHQ). The protein is 3-dehydroquinate synthase of Caulobacter vibrioides (strain NA1000 / CB15N) (Caulobacter crescentus).